We begin with the raw amino-acid sequence, 292 residues long: Ribosomal protein L11 methyltransferase (292 aa).

S-adenosyl-L-methionine is bound by residues Thr144, Gly165, Asp187, and Asn229.

This sequence belongs to the methyltransferase superfamily. PrmA family.

It localises to the cytoplasm. The catalysed reaction is L-lysyl-[protein] + 3 S-adenosyl-L-methionine = N(6),N(6),N(6)-trimethyl-L-lysyl-[protein] + 3 S-adenosyl-L-homocysteine + 3 H(+). Methylates ribosomal protein L11. The chain is Ribosomal protein L11 methyltransferase from Pseudomonas fluorescens (strain SBW25).